The following is a 632-amino-acid chain: MAU2 chromatid cohesion factor homolog (632 aa).

TPR repeat units follow at residues 453–486 (GGFY…ANAE) and 493–526 (SCSL…ASKI).

Belongs to the SCC4/mau-2 family. In terms of assembly, interacts with Nipped-B to form the cohesin loading complex.

The protein localises to the nucleus. It is found in the nucleoplasm. Required for association of the cohesin complex with chromatin during interphase. Plays a role in sister chromatid cohesion and normal progression through prometaphase. The chain is MAU2 chromatid cohesion factor homolog from Drosophila erecta (Fruit fly).